The sequence spans 365 residues: Outer capsid protein sigma-3 (365 aa).

The segment at 51–73 (CMHCLGVVGSLQRKLKHLPHHRC) adopts a CCHC-type zinc-finger fold.

The protein belongs to the orthoreovirus sigma-3 protein family. In terms of assembly, heterohexamer of three sigma-3 and three Mu-1 proteins. The RNA-binding form is probably a homodimer. Cleaved during virus the endosomal proteolytic disassembly of the outer capsid.

Its subcellular location is the virion. It is found in the host cytoplasm. The protein resides in the host nucleus. Functionally, stimulates translation by blocking the activation of the dsRNA-dependent protein kinase EIF2AK2/PKR, thereby inhibiting the host interferon response. Sigma3 prevents the activation of EIF2AK2 by competing with the kinase for dsRNA-binding. In terms of biological role, the viral outer shell polypeptides, of which sigma-3 is one, impose structural constraints that prevent elongation of nascent transcripts by the RNA-dependent RNA polymerase lambda-3. The polypeptide is Outer capsid protein sigma-3 (S4) (Reovirus type 3 (strain Dearing) (T3D)).